The primary structure comprises 26 residues: Omega-conotoxin TVIA (26 aa).

3 disulfides stabilise this stretch: cysteine 1–cysteine 16, cysteine 8–cysteine 19, and cysteine 15–cysteine 26. A 4-hydroxyproline mark is found at proline 4, proline 10, and proline 21.

This sequence belongs to the conotoxin O1 superfamily. Expressed by the venom duct.

The protein localises to the secreted. Functionally, omega-conotoxins act at presynaptic membranes, they bind and block voltage-gated calcium channels (Cav). This chain is Omega-conotoxin TVIA, found in Conus tulipa (Fish-hunting cone snail).